A 1073-amino-acid chain; its full sequence is Guanylyl cyclase C (1073 aa).

Residues 1–23 (MKTPLLALALWSLLLQLGLTFWP) form the signal peptide. Topologically, residues 24–433 (SSVSQNCHNG…IPGRGPQILM (410 aa)) are extracellular. N32, N43, N79, N195, N284, N307, and N402 each carry an N-linked (GlcNAc...) asparagine glycan. A helical transmembrane segment spans residues 434-454 (IAVFTLTGTIVLLLLIALLVL). The Cytoplasmic portion of the chain corresponds to 455–1073 (RKYKREYALR…NTTDNESTHF (619 aa)). The region spanning 489-749 (LKIDDDRRRD…KIENTLAKIF (261 aa)) is the Protein kinase domain. A Guanylate cyclase domain is found at 824-954 (TIYFSDIVGF…DTVNTASRME (131 aa)).

This sequence belongs to the adenylyl cyclase class-4/guanylyl cyclase family. In terms of assembly, homotrimer. Interacts via its C-terminal region with NHERF4. Interacts with the lectin chaperone VIP36. Glycosylation at Asn-79 is required for interaction with VIP36 while glycosylation at Asn-402 modulates ligand-mediated GC-C activation.

The protein localises to the cell membrane. The protein resides in the endoplasmic reticulum membrane. It carries out the reaction GTP = 3',5'-cyclic GMP + diphosphate. In terms of biological role, guanylyl cyclase that catalyzes synthesis of cyclic GMP (cGMP) from GTP. The chain is Guanylyl cyclase C (GUCY2C) from Sus scrofa (Pig).